The following is a 308-amino-acid chain: Mycothiol acetyltransferase (308 aa).

N-acetyltransferase domains follow at residues 16–152 and 165–308; these read ETLA…RPLA and VTVR…RTES. A 1D-myo-inositol 2-(L-cysteinylamino)-2-deoxy-alpha-D-glucopyranoside-binding site is contributed by Glu47. 91–93 provides a ligand contact to acetyl-CoA; the sequence is LVV. Positions 192, 231, and 240 each coordinate 1D-myo-inositol 2-(L-cysteinylamino)-2-deoxy-alpha-D-glucopyranoside. Residues 244-246 and 251-257 each bind acetyl-CoA; these read LGV and QGGGLGK. Tyr278 lines the 1D-myo-inositol 2-(L-cysteinylamino)-2-deoxy-alpha-D-glucopyranoside pocket.

Belongs to the acetyltransferase family. MshD subfamily. As to quaternary structure, monomer.

The catalysed reaction is 1D-myo-inositol 2-(L-cysteinylamino)-2-deoxy-alpha-D-glucopyranoside + acetyl-CoA = mycothiol + CoA + H(+). Functionally, catalyzes the transfer of acetyl from acetyl-CoA to desacetylmycothiol (Cys-GlcN-Ins) to form mycothiol. The polypeptide is Mycothiol acetyltransferase (Streptomyces avermitilis (strain ATCC 31267 / DSM 46492 / JCM 5070 / NBRC 14893 / NCIMB 12804 / NRRL 8165 / MA-4680)).